A 544-amino-acid chain; its full sequence is Elongator complex protein 3 (544 aa).

A Radical SAM core domain is found at 79–369 (RTASGIAVVA…YRIQRDIPMP (291 aa)). The [4Fe-4S] cluster site is built by C96, C106, and C109. Residues K161, 472–475 (ELHV), 495–497 (FGT), and Y528 each bind acetyl-CoA. One can recognise an N-acetyltransferase domain in the interval 393 to 544 (TKCRDIRARE…LDGPYMSKWL (152 aa)).

It belongs to the ELP3 family. Component of the elongator complex. The cofactor is [4Fe-4S] cluster.

The protein resides in the cytoplasm. It catalyses the reaction uridine(34) in tRNA + acetyl-CoA + S-adenosyl-L-methionine + H2O = 5-(carboxymethyl)uridine(34) in tRNA + 5'-deoxyadenosine + L-methionine + CoA + 2 H(+). It functions in the pathway tRNA modification; 5-methoxycarbonylmethyl-2-thiouridine-tRNA biosynthesis. Catalytic tRNA acetyltransferase subunit of the elongator complex which is required for multiple tRNA modifications, including mcm5U (5-methoxycarbonylmethyl uridine), mcm5s2U (5-methoxycarbonylmethyl-2-thiouridine), and ncm5U (5-carbamoylmethyl uridine). In the elongator complex, acts as a tRNA uridine(34) acetyltransferase, which mediates formation of carboxymethyluridine in the wobble base at position 34 in tRNAs. The sequence is that of Elongator complex protein 3 from Schizosaccharomyces pombe (strain 972 / ATCC 24843) (Fission yeast).